The chain runs to 167 residues: Protein-export protein SecB (167 aa).

It belongs to the SecB family. In terms of assembly, homotetramer, a dimer of dimers. One homotetramer interacts with 1 SecA dimer.

The protein resides in the cytoplasm. Functionally, one of the proteins required for the normal export of preproteins out of the cell cytoplasm. It is a molecular chaperone that binds to a subset of precursor proteins, maintaining them in a translocation-competent state. It also specifically binds to its receptor SecA. This is Protein-export protein SecB from Wolbachia sp. subsp. Brugia malayi (strain TRS).